A 677-amino-acid polypeptide reads, in one-letter code: Secretogranin-1 (677 aa).

The first 20 residues, M1–S20, serve as a signal peptide directing secretion. Residues C36 and C57 are joined by a disulfide bond. Composition is skewed to basic and acidic residues over residues S64–S100 and A118–E136. The interval S64–A463 is disordered. Phosphothreonine is present on T79. Residues S93, S99, and S100 each carry the phosphoserine modification. O-linked (Xyl...) (chondroitin sulfate) serine glycosylation is present at S93. The segment at T116 to T120 is O-glycosylated at one site. Position 130 is a phosphoserine; by FAM20C (S130). S149 carries the phosphoserine modification. 3 stretches are compositionally biased toward basic and acidic residues: residues E150–R162, N172–E190, and N200–S236. Residue S183 is modified to Phosphoserine. S225 is subject to Phosphoserine; by FAM20C. O-linked (Xyl...) (chondroitin sulfate) serine glycosylation is present at S239. Phosphoserine occurs at positions 259 and 263. Residues E262–S272 show a composition bias toward acidic residues. Positions R277–R287 are enriched in basic residues. 4 positions are modified to phosphoserine: S293, S294, S311, and S335. Sulfotyrosine is present on Y341. A compositionally biased stretch (basic and acidic residues) spans W359 to A372. Phosphoserine; by FAM20C is present on residues S367, S377, and S380. Composition is skewed to basic and acidic residues over residues E384–K415 and D433–K455. At Y401 the chain carries Phosphotyrosine. Phosphoserine is present on S405. At Y474 the chain carries Sulfotyrosine. The disordered stretch occupies residues G475 to A512. Over residues Q490–D503 the composition is skewed to basic and acidic residues. S533 and S534 each carry phosphoserine. Y566 carries the post-translational modification Sulfotyrosine. S617 is modified (phosphoserine). The interval D622–K653 is disordered. Residue Y624 is modified to Sulfotyrosine. Phosphoserine occurs at positions 626 and 631. Residues Q634 to K653 show a composition bias toward basic and acidic residues.

The protein belongs to the chromogranin/secretogranin protein family. As to quaternary structure, interacts with ITPR1 in the secretory granules. Extensively processed by limited proteolysis at conserved basic residues. Alternative processing are seen in different tissues. In terms of processing, O-glycosylated. As to expression, detected in cerebrospinal fluid and urine (at protein level). Expressed in the adrenal medulla, and in pheochromocytoma. Not expressed in liver.

The protein resides in the secreted. Secretogranin-1 is a neuroendocrine secretory granule protein, which may be the precursor for other biologically active peptides. The polypeptide is Secretogranin-1 (CHGB) (Homo sapiens (Human)).